The sequence spans 1124 residues: tRNA (34-2'-O)-methyltransferase regulator WDR6 (1124 aa).

The residue at position 1 (M1) is an N-acetylmethionine. WD repeat units lie at residues 53 to 97 (MKRV…IVKI), 105 to 143 (RELWRSGLWNMSDWIWDARWLEGNIALALGHNSVVLYDP), 147 to 189 (CSLQ…VWYP), 200 to 238 (VPDRRVSGHVGVIFSMSYLESKGLLATASEDRSVRIWKV), 247 to 285 (RVQNIGHCFGHSARVWQVKLLENYLISAGEDCVCLVWSH), 289 to 327 (ILQAFRGHQGRGIRALAAHERQAWVITGGDDSGIRLWHL), 335 to 376 (SGVF…LYDL), 381 to 422 (WEQL…VVPI), 425 to 470 (PTAA…ISAA), 476 to 520 (IFVK…LYPS), 557 to 596 (PMSTLPSLHGKQGVTSVTCHGGYVYTTGRDGSYYQLFVRG), 602 to 640 (VLRQKPCRGMNWVAGVRMVADGNMVILGFHANEFVVWSP), 643 to 682 (HEKLHIINCGGGHRSWAFSDTEAAMAFAYLKDGDVMLYRA), 743 to 789 (LIDI…VWGV), 852 to 897 (RHRH…LFLL), 905 to 950 (QLLA…FWDL), 974 to 1015 (GSPC…VFVL), 1039 to 1076 (EEYSVPCAHAAHVTGLKILSRSLMVSASIDQRLTFWRL), and 1082 to 1124 (TFMN…NWYD).

Belongs to the WD repeat WDR6 family. In terms of assembly, interacts with FTSJ1; the interaction is direct, and required for 2'-O-methylation of position 34 in substrate tRNAs. Interacts with IRS4. Interacts with STK11/LKB1.

It localises to the cytoplasm. Its function is as follows. Together with methyltransferase FTSJ1, methylates the 2'-O-ribose of nucleotides at position 34 of the tRNA anticodon loop of substrate tRNAs. Required for the correct positioning of the substrate tRNA for methylation. Required to suppress amino acid starvation-induced autophagy. Enhances the STK11/LKB1-induced cell growth suppression activity. In Bos taurus (Bovine), this protein is tRNA (34-2'-O)-methyltransferase regulator WDR6 (WDR6).